Here is a 426-residue protein sequence, read N- to C-terminus: Protein prenyltransferase alpha subunit repeat-containing protein 1 (426 aa).

4 PFTA repeats span residues 86–119, 121–154, 180–213, and 219–252; these read ALVDITSTLLLLNPDFTTAWNVRKELLQCGVLNP, KDLYLGKLALSKHPKSPETWIHRRWVLQRLQKEC, EEMRVCAEAAGRYPSNYNAWSHRIWVLQNMAKGN, and DELSSTRLWVSMHVSDHSGFHYRQHLLKALAKEL. Residues 255 to 279 are disordered; that stretch reads AAEKDVHTSQQPNGENTATASDDNH. Residues 262 to 275 show a composition bias toward polar residues; sequence TSQQPNGENTATAS. The stretch at 290–323 is one PFTA 5 repeat; it reads EEIQLCTDLIESYPGHETLWCHRRHVFYLWHQWR.

This sequence belongs to the protein prenyltransferase subunit alpha family.

This chain is Protein prenyltransferase alpha subunit repeat-containing protein 1 (ptar1), found in Danio rerio (Zebrafish).